The following is a 263-amino-acid chain: Phosphatidylglycerol--prolipoprotein diacylglyceryl transferase (263 aa).

The next 4 helical transmembrane spans lie at 6 to 26, 50 to 70, 85 to 105, and 112 to 132; these read VIFS…VLGI, LLTA…VLIY, TWEG…AVII, and IPIF…LFLG. Arginine 133 provides a ligand contact to a 1,2-diacyl-sn-glycero-3-phospho-(1'-sn-glycerol). The next 3 helical transmembrane spans lie at 169–189, 197–217, and 233–253; these read LYEA…LFFL, GALT…VEFF, and MGQL…LGAL.

This sequence belongs to the Lgt family.

Its subcellular location is the cell membrane. It catalyses the reaction L-cysteinyl-[prolipoprotein] + a 1,2-diacyl-sn-glycero-3-phospho-(1'-sn-glycerol) = an S-1,2-diacyl-sn-glyceryl-L-cysteinyl-[prolipoprotein] + sn-glycerol 1-phosphate + H(+). Its pathway is protein modification; lipoprotein biosynthesis (diacylglyceryl transfer). In terms of biological role, catalyzes the transfer of the diacylglyceryl group from phosphatidylglycerol to the sulfhydryl group of the N-terminal cysteine of a prolipoprotein, the first step in the formation of mature lipoproteins. This is Phosphatidylglycerol--prolipoprotein diacylglyceryl transferase from Wolbachia sp. subsp. Drosophila simulans (strain wRi).